We begin with the raw amino-acid sequence, 108 residues long: Universal stress protein Slr1101 (108 aa).

It belongs to the universal stress protein A family.

The sequence is that of Universal stress protein Slr1101 from Synechocystis sp. (strain ATCC 27184 / PCC 6803 / Kazusa).